The following is a 262-amino-acid chain: Small ribosomal subunit protein eS1 (262 aa).

Belongs to the eukaryotic ribosomal protein eS1 family. Component of the small ribosomal subunit. Mature ribosomes consist of a small (40S) and a large (60S) subunit. The 40S subunit contains about 33 different proteins and 1 molecule of RNA (18S). The 60S subunit contains about 49 different proteins and 3 molecules of RNA (25S, 5.8S and 5S).

The protein resides in the cytoplasm. The chain is Small ribosomal subunit protein eS1 from Plasmodium vivax (strain Salvador I).